Consider the following 376-residue polypeptide: MDIYKFAVRPLLFDLVKADPEWLHQQTMRSLSWLSHTSDRTSTKWVQNILQKSLCIEDSRLEQNLFGLRFPNPVGLAAGFDKDGVAARIWSSLGFGFAELGTVTFVAQPGNPPPRLFRLPLDQAALNRMGFNNHGAAVMATRLADEKGLFSIPIGINLGKSKVTPLEAAAEDYLNSFRLLKELGDYFVVNVSSPNTPGLRSLQDASMLSSILDVLQKENQSHKPIFVKIAPDLEWEAIADIIGLAKTYQLAGIIATNTTIRRDGLKTQVIEQTGKAPQEEAGGISGAPVRDRSTEIIRFIWQQTQGEIPIIGVGGIFTPEDAWAKITAGASLIQVYTGWIYQGPMMVSQILTGLLAKLEEHELNSISEAIGLEFKS.

Residues 78–82 (AGFDK) and Thr102 contribute to the FMN site. Residue Lys82 coordinates substrate. Substrate is bound at residue 127 to 131 (NRMGF). FMN is bound by residues Asn157 and Asn190. Asn190 provides a ligand contact to substrate. Catalysis depends on Ser193, which acts as the Nucleophile. Asn195 provides a ligand contact to substrate. The FMN site is built by Lys228 and Thr256. Position 257-258 (257-258 (NT)) interacts with substrate. FMN is bound by residues Gly286, Gly315, and 336–337 (YT).

It belongs to the dihydroorotate dehydrogenase family. Type 2 subfamily. Monomer. FMN is required as a cofactor.

It is found in the cell membrane. It carries out the reaction (S)-dihydroorotate + a quinone = orotate + a quinol. It functions in the pathway pyrimidine metabolism; UMP biosynthesis via de novo pathway; orotate from (S)-dihydroorotate (quinone route): step 1/1. Catalyzes the conversion of dihydroorotate to orotate with quinone as electron acceptor. The sequence is that of Dihydroorotate dehydrogenase (quinone) from Trichormus variabilis (strain ATCC 29413 / PCC 7937) (Anabaena variabilis).